We begin with the raw amino-acid sequence, 432 residues long: Polyamine export protein (432 aa).

A CNNM transmembrane domain is found at 1-201 (MIMELFHTIL…AEAGVLKTQE (201 aa)). A run of 4 helical transmembrane segments spans residues 2–22 (IMEL…SAVV), 61–81 (FITV…GIGE), 100–120 (WIAP…FILF), and 138–158 (LSVV…VWFF). 2 consecutive CBS domains span residues 220-279 (MTTR…NENV) and 286-345 (LLRK…SNEE).

It belongs to the UPF0053 family. PaeA subfamily.

It localises to the cell inner membrane. Functionally, involved in cadaverine and putrescine tolerance in stationary phase. May facilitate the efflux of both cadaverine and putrescine from the cytoplasm, reducing potentially toxic levels under certain stress conditions. This is Polyamine export protein from Haemophilus influenzae (strain ATCC 51907 / DSM 11121 / KW20 / Rd).